Consider the following 415-residue polypeptide: Enolase (415 aa).

Glutamine 161 is a (2R)-2-phosphoglycerate binding site. Glutamate 203 acts as the Proton donor in catalysis. Residues aspartate 240, glutamate 281, and aspartate 308 each contribute to the Mg(2+) site. (2R)-2-phosphoglycerate contacts are provided by lysine 333, arginine 362, serine 363, and lysine 384. Lysine 333 serves as the catalytic Proton acceptor.

This sequence belongs to the enolase family. Mg(2+) is required as a cofactor.

Its subcellular location is the cytoplasm. It localises to the secreted. The protein resides in the cell surface. It carries out the reaction (2R)-2-phosphoglycerate = phosphoenolpyruvate + H2O. The protein operates within carbohydrate degradation; glycolysis; pyruvate from D-glyceraldehyde 3-phosphate: step 4/5. Its function is as follows. Catalyzes the reversible conversion of 2-phosphoglycerate (2-PG) into phosphoenolpyruvate (PEP). It is essential for the degradation of carbohydrates via glycolysis. The polypeptide is Enolase (Campylobacter hominis (strain ATCC BAA-381 / DSM 21671 / CCUG 45161 / LMG 19568 / NCTC 13146 / CH001A)).